We begin with the raw amino-acid sequence, 321 residues long: Serine/threonine-protein phosphatase PP1 (321 aa).

Residues Asp60, His62, Asp88, and Asn120 each contribute to the Mn(2+) site. The active-site Proton donor is the His121. Mn(2+) is bound by residues His169 and His244. Positions 298–321 (KKLTNDSNGRPLTPPRNKQQKPKK) are disordered.

It belongs to the PPP phosphatase family. Interacts with dpiA. The cofactor is Mn(2+).

It catalyses the reaction O-phospho-L-seryl-[protein] + H2O = L-seryl-[protein] + phosphate. It carries out the reaction O-phospho-L-threonyl-[protein] + H2O = L-threonyl-[protein] + phosphate. With respect to regulation, inhibited by okadaic acid, tautomycin and calyculin A. Inhibited by phosphatase inhibitor 2 (dpiA). Functionally, protein phosphatase activity in vitro. The polypeptide is Serine/threonine-protein phosphatase PP1 (pppB) (Dictyostelium discoideum (Social amoeba)).